We begin with the raw amino-acid sequence, 238 residues long: Small ribosomal subunit protein uS3 (238 aa).

Residues 39–107 enclose the KH type-2 domain; that stretch reads MREFIHDYAK…ELHLNIVEIR (69 aa). Residues 212–222 show a composition bias toward basic and acidic residues; sequence PQAHDRRHSEA. Positions 212–238 are disordered; the sequence is PQAHDRRHSEAQEGAAPRPPRRDRERA.

It belongs to the universal ribosomal protein uS3 family. In terms of assembly, part of the 30S ribosomal subunit. Forms a tight complex with proteins S10 and S14.

Its function is as follows. Binds the lower part of the 30S subunit head. Binds mRNA in the 70S ribosome, positioning it for translation. The polypeptide is Small ribosomal subunit protein uS3 (Cereibacter sphaeroides (strain ATCC 17029 / ATH 2.4.9) (Rhodobacter sphaeroides)).